We begin with the raw amino-acid sequence, 168 residues long: Mitochondrial ATP-independent inner membrane protease subunit 1a (168 aa).

The transit peptide at 1–47 (MRMTFLSYLKQWRGTAKEAFENVSIVAKFLCLLHVTDRYIISTTHVH) directs the protein to the mitochondrion. Active-site residues include S50 and K94.

It belongs to the peptidase S26 family. IMP1 subfamily. In terms of assembly, heterodimer of 2 subunits, IMP1A/B and IMP12.

The protein resides in the mitochondrion inner membrane. In terms of biological role, catalyzes the removal of transit peptides required for the targeting of proteins from the mitochondrial matrix, across the inner membrane, into the inter-membrane space. The sequence is that of Mitochondrial ATP-independent inner membrane protease subunit 1a from Arabidopsis thaliana (Mouse-ear cress).